The primary structure comprises 457 residues: Multidrug resistance protein MdtK (457 aa).

Helical transmembrane passes span 11–31 (LLAL…MGFV), 53–73 (IWLP…PVIA), 93–113 (WLAG…GYII), 127–147 (AVGY…FQVA), 160–180 (GMVM…IFIY), 188–208 (LGGI…FIAM), 243–263 (LPIA…ALLV), 276–296 (IALN…AAVT), 314–334 (AART…IFTV), 350–370 (VVAL…SDSI), 387–407 (IFFI…YILA), and 418–438 (PAGF…LMML).

Belongs to the multi antimicrobial extrusion (MATE) (TC 2.A.66.1) family. MdtK subfamily.

It is found in the cell inner membrane. Its function is as follows. Multidrug efflux pump that functions probably as a Na(+)/drug antiporter. In Salmonella agona (strain SL483), this protein is Multidrug resistance protein MdtK.